The primary structure comprises 66 residues: Large ribosomal subunit protein bL31 (66 aa).

Zn(2+)-binding residues include Cys16, Cys18, Cys36, and Cys39.

It belongs to the bacterial ribosomal protein bL31 family. Type A subfamily. Part of the 50S ribosomal subunit. The cofactor is Zn(2+).

Functionally, binds the 23S rRNA. The polypeptide is Large ribosomal subunit protein bL31 (Priestia megaterium (Bacillus megaterium)).